Reading from the N-terminus, the 188-residue chain is MTKMIVGLGNPGDKYEKTKHNMGFMALDLLAKELNVDFKEEKPFMSLVASTFVNGEKLFLVKPLTFMNESGRAVAPLLKYYNIDEADLTVMHDDLDSPVGRVRLRQKGSSGGQNGIKSVITHVGSQTFNRVKIGIGRPKHGMTVVNHVLSGFDNEDKEIAQDGIFKAVDAMKFYLENGDFQKTMNKFN.

Tyrosine 15 serves as a coordination point for tRNA. Histidine 20 functions as the Proton acceptor in the catalytic mechanism. TRNA-binding residues include phenylalanine 66, asparagine 68, and asparagine 114.

It belongs to the PTH family. Monomer.

Its subcellular location is the cytoplasm. It carries out the reaction an N-acyl-L-alpha-aminoacyl-tRNA + H2O = an N-acyl-L-amino acid + a tRNA + H(+). In terms of biological role, hydrolyzes ribosome-free peptidyl-tRNAs (with 1 or more amino acids incorporated), which drop off the ribosome during protein synthesis, or as a result of ribosome stalling. Catalyzes the release of premature peptidyl moieties from peptidyl-tRNA molecules trapped in stalled 50S ribosomal subunits, and thus maintains levels of free tRNAs and 50S ribosomes. The protein is Peptidyl-tRNA hydrolase of Lactococcus lactis subsp. cremoris (strain MG1363).